The chain runs to 616 residues: Dihydroxy-acid dehydratase (616 aa).

Asp81 serves as a coordination point for Mg(2+). Cys122 lines the [2Fe-2S] cluster pocket. Mg(2+) is bound by residues Asp123 and Lys124. An N6-carboxylysine modification is found at Lys124. Residue Cys195 participates in [2Fe-2S] cluster binding. Glu491 is a binding site for Mg(2+). Catalysis depends on Ser517, which acts as the Proton acceptor.

It belongs to the IlvD/Edd family. As to quaternary structure, homodimer. It depends on [2Fe-2S] cluster as a cofactor. Mg(2+) is required as a cofactor.

It carries out the reaction (2R)-2,3-dihydroxy-3-methylbutanoate = 3-methyl-2-oxobutanoate + H2O. The catalysed reaction is (2R,3R)-2,3-dihydroxy-3-methylpentanoate = (S)-3-methyl-2-oxopentanoate + H2O. It participates in amino-acid biosynthesis; L-isoleucine biosynthesis; L-isoleucine from 2-oxobutanoate: step 3/4. The protein operates within amino-acid biosynthesis; L-valine biosynthesis; L-valine from pyruvate: step 3/4. In terms of biological role, functions in the biosynthesis of branched-chain amino acids. Catalyzes the dehydration of (2R,3R)-2,3-dihydroxy-3-methylpentanoate (2,3-dihydroxy-3-methylvalerate) into 2-oxo-3-methylpentanoate (2-oxo-3-methylvalerate) and of (2R)-2,3-dihydroxy-3-methylbutanoate (2,3-dihydroxyisovalerate) into 2-oxo-3-methylbutanoate (2-oxoisovalerate), the penultimate precursor to L-isoleucine and L-valine, respectively. In Pectobacterium carotovorum subsp. carotovorum (strain PC1), this protein is Dihydroxy-acid dehydratase.